Reading from the N-terminus, the 343-residue chain is Phosphate acyltransferase (343 aa).

The protein belongs to the PlsX family. In terms of assembly, homodimer. Probably interacts with PlsY.

The protein localises to the cytoplasm. The catalysed reaction is a fatty acyl-[ACP] + phosphate = an acyl phosphate + holo-[ACP]. It functions in the pathway lipid metabolism; phospholipid metabolism. Functionally, catalyzes the reversible formation of acyl-phosphate (acyl-PO(4)) from acyl-[acyl-carrier-protein] (acyl-ACP). This enzyme utilizes acyl-ACP as fatty acyl donor, but not acyl-CoA. The chain is Phosphate acyltransferase from Coxiella burnetii (strain Dugway 5J108-111).